The following is a 200-amino-acid chain: MKQRKLRAGDMALIGMFAALMAVGANITSVAPFLQVAGIPLSMQPFFCLLAALLLGSKRAAIAMIVYALVGLAGAPVFAQFSAGFAPFAGKSGGFIISYIPAAFAAGWFLERNIQPSKIRFLIASLIGTAIMYLIGTTYMYLALKLWIHTPVSYGTAWGFMIWFMVKDTALAVILSFIAPAIYRSIHKATGFNRNHISST.

6 consecutive transmembrane segments (helical) span residues 13-33 (LIGM…VAPF), 36-56 (VAGI…LLLG), 61-81 (AIAM…FAQF), 90-110 (GKSG…GWFL), 121-141 (FLIA…TYMY), and 158-178 (WGFM…LSFI).

The protein belongs to the BioY family.

Its subcellular location is the cell membrane. Putative biotin transporter. This Bacillus subtilis (strain 168) protein is Putative biotin transporter BioYB (bioYB).